A 1405-amino-acid polypeptide reads, in one-letter code: Rho guanine nucleotide exchange factor 18 (1405 aa).

Disordered stretches follow at residues 1–47 (MGSE…EDGF), 92–115 (ETHRQEARRESSHTSCEGASALPQ), and 289–330 (PGKS…PGKR). 2 stretches are compositionally biased toward basic and acidic residues: residues 92–103 (ETHRQEARRESS) and 308–330 (RQKEKGKSPAHLKDKTQDLPGKR). The C2H2-type; degenerate zinc finger occupies 347–372 (SSCPLCGEPLLNSASLKEHPRTTLLS). The DH domain maps to 485–682 (KRQDVLYELM…KDIISQVDAK (198 aa)). The region spanning 723–825 (QLHLEGALCW…WMAHIRRAVE (103 aa)) is the PH domain. The interval 936–1016 (QVEEGSVSAG…PQAVEMPSTE (81 aa)) is disordered. The residue at position 952 (T952) is a Phosphothreonine. A Phosphoserine modification is found at S961. Positions 1084 to 1181 (FEKQREERAG…RERLELLRRF (98 aa)) form a coiled coil. Disordered regions lie at residues 1198–1242 (EAQP…VERP), 1274–1309 (RQTAVQQQIPTKLAASTKGGKEKGSKSRGSQRWESS), and 1328–1405 (ESAS…VIFF). Phosphoserine occurs at positions 1336 and 1338. Over residues 1355-1365 (FPAPSPAPAAT) the composition is skewed to pro residues. Residues 1375–1394 (TSLPPVSPASSLPTTPLATT) show a composition bias toward low complexity. Residues 1396-1405 (EVSKEDVIFF) show a composition bias toward basic and acidic residues.

In terms of assembly, interacts with SEPT9; interaction may inhibit GEF activity. Interacts with Gbetagamma subunits GNB1 and GNG2. Interacts with EPB41L4B. Interacts with PATJ (via C-terminus).

It is found in the cytoplasm. The protein resides in the cytoskeleton. The protein localises to the cell membrane. Its subcellular location is the apical cell membrane. Its function is as follows. Acts as a guanine nucleotide exchange factor (GEF) for RhoA GTPases. May play a role in actin cytoskeleton reorganization in different tissues since its activation induces formation of actin stress fibers. Also acts as a GEF for RAC1, inducing production of reactive oxygen species (ROS). Does not act as a GEF for CDC42. The G protein beta-gamma (Gbetagamma) subunits of heterotrimeric G proteins act as activators, explaining the integrated effects of LPA and other G-protein coupled receptor agonists on actin stress fiber formation, cell shape change and ROS production. Required for EPB41L4B-mediated regulation of the circumferential actomyosin belt in epithelial cells. In Mus musculus (Mouse), this protein is Rho guanine nucleotide exchange factor 18 (Arhgef18).